A 122-amino-acid polypeptide reads, in one-letter code: Large ribosomal subunit protein uL14 (122 aa).

The protein belongs to the universal ribosomal protein uL14 family. Part of the 50S ribosomal subunit. Forms a cluster with proteins L3 and L19. In the 70S ribosome, L14 and L19 interact and together make contacts with the 16S rRNA in bridges B5 and B8.

Functionally, binds to 23S rRNA. Forms part of two intersubunit bridges in the 70S ribosome. The protein is Large ribosomal subunit protein uL14 of Desulforapulum autotrophicum (strain ATCC 43914 / DSM 3382 / VKM B-1955 / HRM2) (Desulfobacterium autotrophicum).